The following is a 247-amino-acid chain: Adenosylcobinamide-GDP ribazoletransferase (247 aa).

Transmembrane regions (helical) follow at residues 34–54 (IITF…VFMV), 59–79 (CGAP…TGGF), 113–133 (GGLA…ELAL), 138–158 (ILAS…LLMY), and 194–214 (VLLP…AIFI).

This sequence belongs to the CobS family. The cofactor is Mg(2+).

The protein localises to the cell inner membrane. It catalyses the reaction alpha-ribazole + adenosylcob(III)inamide-GDP = adenosylcob(III)alamin + GMP + H(+). The catalysed reaction is alpha-ribazole 5'-phosphate + adenosylcob(III)inamide-GDP = adenosylcob(III)alamin 5'-phosphate + GMP + H(+). The protein operates within cofactor biosynthesis; adenosylcobalamin biosynthesis; adenosylcobalamin from cob(II)yrinate a,c-diamide: step 7/7. Joins adenosylcobinamide-GDP and alpha-ribazole to generate adenosylcobalamin (Ado-cobalamin). Also synthesizes adenosylcobalamin 5'-phosphate from adenosylcobinamide-GDP and alpha-ribazole 5'-phosphate. The polypeptide is Adenosylcobinamide-GDP ribazoletransferase (Escherichia coli O45:K1 (strain S88 / ExPEC)).